The primary structure comprises 216 residues: Adenylate kinase (216 aa).

Position 10–15 (10–15 (GAGKGT)) interacts with ATP. Positions 30–59 (STGDILRENVKKGTALGLKAKSYMDKGELV) are NMP. Residues Thr-31, Arg-36, 57-59 (ELV), 85-88 (GFPR), and Gln-92 each bind AMP. The interval 126 to 163 (GRRICRSCGASYHLVFNPPKAKDLCDSCGGELYQRDDD) is LID. Arg-127 provides a ligand contact to ATP. Positions 130 and 133 each coordinate Zn(2+). 136 to 137 (SY) serves as a coordination point for ATP. Residues Cys-150 and Cys-153 each coordinate Zn(2+). Arg-160 and Arg-171 together coordinate AMP. Residue Lys-199 participates in ATP binding.

It belongs to the adenylate kinase family. Monomer.

Its subcellular location is the cytoplasm. It catalyses the reaction AMP + ATP = 2 ADP. It functions in the pathway purine metabolism; AMP biosynthesis via salvage pathway; AMP from ADP: step 1/1. Functionally, catalyzes the reversible transfer of the terminal phosphate group between ATP and AMP. Plays an important role in cellular energy homeostasis and in adenine nucleotide metabolism. The polypeptide is Adenylate kinase (Methanocella arvoryzae (strain DSM 22066 / NBRC 105507 / MRE50)).